The chain runs to 360 residues: Histidinol-phosphate aminotransferase (360 aa).

Position 224 is an N6-(pyridoxal phosphate)lysine (Lys224).

It belongs to the class-II pyridoxal-phosphate-dependent aminotransferase family. Histidinol-phosphate aminotransferase subfamily. Pyridoxal 5'-phosphate serves as cofactor.

The enzyme catalyses L-histidinol phosphate + 2-oxoglutarate = 3-(imidazol-4-yl)-2-oxopropyl phosphate + L-glutamate. The protein operates within amino-acid biosynthesis; L-histidine biosynthesis; L-histidine from 5-phospho-alpha-D-ribose 1-diphosphate: step 7/9. In Methanococcoides burtonii (strain DSM 6242 / NBRC 107633 / OCM 468 / ACE-M), this protein is Histidinol-phosphate aminotransferase.